Here is a 517-residue protein sequence, read N- to C-terminus: Crotonobetaine/carnitine--CoA ligase (517 aa).

It belongs to the ATP-dependent AMP-binding enzyme family.

It carries out the reaction 4-(trimethylamino)butanoate + ATP + CoA = 4-(trimethylamino)butanoyl-CoA + AMP + diphosphate. The catalysed reaction is crotonobetaine + ATP + CoA = crotonobetainyl-CoA + AMP + diphosphate. The enzyme catalyses (R)-carnitine + ATP + CoA = (R)-carnitinyl-CoA + AMP + diphosphate. It participates in amine and polyamine metabolism; carnitine metabolism. Its function is as follows. Catalyzes the transfer of CoA to carnitine, generating the initial carnitinyl-CoA needed for the CaiB reaction cycle. Also has activity toward crotonobetaine and gamma-butyrobetaine. This Escherichia coli O9:H4 (strain HS) protein is Crotonobetaine/carnitine--CoA ligase.